Here is a 379-residue protein sequence, read N- to C-terminus: Homoserine O-succinyltransferase (379 aa).

The AB hydrolase-1 domain occupies 51–360; that stretch reads NAVLICHALS…DAPQGHDAFL (310 aa). The active-site Nucleophile is the S157. R227 provides a ligand contact to substrate. Catalysis depends on residues D323 and H356. D357 contacts substrate.

This sequence belongs to the AB hydrolase superfamily. MetX family. As to quaternary structure, homodimer.

Its subcellular location is the cytoplasm. It catalyses the reaction L-homoserine + succinyl-CoA = O-succinyl-L-homoserine + CoA. It participates in amino-acid biosynthesis; L-methionine biosynthesis via de novo pathway; O-succinyl-L-homoserine from L-homoserine: step 1/1. Its activity is regulated as follows. Requires MetW for activity. Its function is as follows. Transfers a succinyl group from succinyl-CoA to L-homoserine, forming succinyl-L-homoserine. This Pseudomonas syringae pv. syringae (strain B728a) protein is Homoserine O-succinyltransferase.